An 80-amino-acid polypeptide reads, in one-letter code: MKKFISRPKRSSRRRKKTPIKPGENIDYKNVGLLRKFISEQGKILSKRITRLTSKQQRAMTKAIKSARILALLPFINNEN.

Residues M1–P19 are compositionally biased toward basic residues. Positions M1–E24 are disordered.

This sequence belongs to the bacterial ribosomal protein bS18 family. Part of the 30S ribosomal subunit.

The protein resides in the plastid. It is found in the chloroplast. In Staurastrum punctulatum (Green alga), this protein is Small ribosomal subunit protein bS18c.